Reading from the N-terminus, the 290-residue chain is 4-hydroxy-3-methylbut-2-enyl diphosphate reductase (290 aa).

C13 lines the [4Fe-4S] cluster pocket. (2E)-4-hydroxy-3-methylbut-2-enyl diphosphate is bound by residues H41 and H75. Dimethylallyl diphosphate contacts are provided by H41 and H75. 2 residues coordinate isopentenyl diphosphate: H41 and H75. C97 is a binding site for [4Fe-4S] cluster. Position 129 (H129) interacts with (2E)-4-hydroxy-3-methylbut-2-enyl diphosphate. Residue H129 coordinates dimethylallyl diphosphate. Residue H129 participates in isopentenyl diphosphate binding. The active-site Proton donor is the E131. T167 is a binding site for (2E)-4-hydroxy-3-methylbut-2-enyl diphosphate. C198 serves as a coordination point for [4Fe-4S] cluster. Residues S226, S227, N228, and S270 each coordinate (2E)-4-hydroxy-3-methylbut-2-enyl diphosphate. 4 residues coordinate dimethylallyl diphosphate: S226, S227, N228, and S270. The isopentenyl diphosphate site is built by S226, S227, N228, and S270.

Belongs to the IspH family. The cofactor is [4Fe-4S] cluster.

It carries out the reaction isopentenyl diphosphate + 2 oxidized [2Fe-2S]-[ferredoxin] + H2O = (2E)-4-hydroxy-3-methylbut-2-enyl diphosphate + 2 reduced [2Fe-2S]-[ferredoxin] + 2 H(+). The catalysed reaction is dimethylallyl diphosphate + 2 oxidized [2Fe-2S]-[ferredoxin] + H2O = (2E)-4-hydroxy-3-methylbut-2-enyl diphosphate + 2 reduced [2Fe-2S]-[ferredoxin] + 2 H(+). It participates in isoprenoid biosynthesis; dimethylallyl diphosphate biosynthesis; dimethylallyl diphosphate from (2E)-4-hydroxy-3-methylbutenyl diphosphate: step 1/1. The protein operates within isoprenoid biosynthesis; isopentenyl diphosphate biosynthesis via DXP pathway; isopentenyl diphosphate from 1-deoxy-D-xylulose 5-phosphate: step 6/6. Functionally, catalyzes the conversion of 1-hydroxy-2-methyl-2-(E)-butenyl 4-diphosphate (HMBPP) into a mixture of isopentenyl diphosphate (IPP) and dimethylallyl diphosphate (DMAPP). Acts in the terminal step of the DOXP/MEP pathway for isoprenoid precursor biosynthesis. The sequence is that of 4-hydroxy-3-methylbut-2-enyl diphosphate reductase from Bacteroides fragilis (strain ATCC 25285 / DSM 2151 / CCUG 4856 / JCM 11019 / LMG 10263 / NCTC 9343 / Onslow / VPI 2553 / EN-2).